Here is a 79-residue protein sequence, read N- to C-terminus: DNA-directed RNA polymerase subunit omega (79 aa).

The protein belongs to the RNA polymerase subunit omega family. In cyanobacteria the RNAP catalytic core is composed of 2 alpha, 1 beta, 1 beta', 1 gamma and 1 omega subunit. When a sigma factor is associated with the core the holoenzyme is formed, which can initiate transcription.

It carries out the reaction RNA(n) + a ribonucleoside 5'-triphosphate = RNA(n+1) + diphosphate. Promotes RNA polymerase assembly. Latches the N- and C-terminal regions of the beta' subunit thereby facilitating its interaction with the beta and alpha subunits. The sequence is that of DNA-directed RNA polymerase subunit omega from Synechococcus sp. (strain JA-2-3B'a(2-13)) (Cyanobacteria bacterium Yellowstone B-Prime).